The chain runs to 563 residues: Heat shock 70 kDa protein 8 (563 aa).

The segment at 1–25 (MAEAAYTVASDSENTGEEKSSSSPS) is disordered. An N-acetylalanine modification is found at A2.

Belongs to the heat shock protein 70 (TC 1.A.33) family. DnaK subfamily.

Functionally, in cooperation with other chaperones, Hsp70s are key components that facilitate folding of de novo synthesized proteins, assist translocation of precursor proteins into organelles, and are responsible for degradation of damaged protein under stress conditions. The sequence is that of Heat shock 70 kDa protein 8 (HSP70-8) from Arabidopsis thaliana (Mouse-ear cress).